A 187-amino-acid polypeptide reads, in one-letter code: Orotate phosphoribosyltransferase (187 aa).

5-phospho-alpha-D-ribose 1-diphosphate-binding positions include R98, K99, K102, H104, and 128–136; that span reads EDVTTTGGS. The orotate site is built by T132 and R160.

This sequence belongs to the purine/pyrimidine phosphoribosyltransferase family. PyrE subfamily. In terms of assembly, homodimer. Requires Mg(2+) as cofactor.

It carries out the reaction orotidine 5'-phosphate + diphosphate = orotate + 5-phospho-alpha-D-ribose 1-diphosphate. It participates in pyrimidine metabolism; UMP biosynthesis via de novo pathway; UMP from orotate: step 1/2. Its function is as follows. Catalyzes the transfer of a ribosyl phosphate group from 5-phosphoribose 1-diphosphate to orotate, leading to the formation of orotidine monophosphate (OMP). The chain is Orotate phosphoribosyltransferase from Rhodopseudomonas palustris (strain BisB5).